Reading from the N-terminus, the 1863-residue chain is Breast cancer type 1 susceptibility protein homolog (1863 aa).

Met-1 is modified (N-acetylmethionine). An RING-type zinc finger spans residues 24–65; that stretch reads CPICLELIKEPVSTKCDHIFCRFCMLKLLNQKKGPSQCPLCK. Lys-109 is covalently cross-linked (Glycyl lysine isopeptide (Lys-Gly) (interchain with G-Cter in SUMO2)). Ser-114 is modified (phosphoserine). 2 stretches are compositionally biased toward basic and acidic residues: residues 231–240 and 248–260; these read KDITNTEHHQ and TTEK…HPEK. Positions 231 to 266 are disordered; sequence KDITNTEHHQSSNNDLNTTEKHATERHPEKYQGSSV. Lys-300 participates in a covalent cross-link: Glycyl lysine isopeptide (Lys-Gly) (interchain with G-Cter in SUMO2). The interval 305–336 is disordered; it reads NKSKQPGLARSQHNRWTGSKETCNDRQTPSTE. Positions 318–334 are enriched in polar residues; sequence NRWTGSKETCNDRQTPS. Residue Lys-338 forms a Glycyl lysine isopeptide (Lys-Gly) (interchain with G-Cter in SUMO2) linkage. Residues Ser-394, Ser-397, Ser-422, and Ser-433 each carry the phosphoserine modification. Glycyl lysine isopeptide (Lys-Gly) (interchain with G-Cter in SUMO2) cross-links involve residues Lys-442, Lys-458, and Lys-518. A Phosphoserine modification is found at Ser-550. Lys-582 participates in a covalent cross-link: Glycyl lysine isopeptide (Lys-Gly) (interchain with G-Cter in SUMO2). The interval 653 to 699 is disordered; the sequence is NYNQMPVRHSRNLQLMEDKESATGAKKSNKPNEQTSKRHASDTFPEL. Phosphoserine is present on residues Ser-693, Ser-707, and Ser-724. Residues Lys-733 and Lys-738 each participate in a glycyl lysine isopeptide (Lys-Gly) (interchain with G-Cter in SUMO2) cross-link. Phosphoserine is present on residues Ser-752 and Ser-839. The disordered stretch occupies residues 886–914; the sequence is AHSRSLKKQSPKVTSECEQKEENQGKKES. The segment covering 900-914 has biased composition (basic and acidic residues); sequence SECEQKEENQGKKES. Glycyl lysine isopeptide (Lys-Gly) (interchain with G-Cter in SUMO2) cross-links involve residues Lys-917 and Lys-986. A Phosphoserine; by CHEK2 modification is found at Ser-987. Position 1008 is a phosphoserine (Ser-1008). The span at 1042 to 1059 shows a compositional bias: polar residues; sequence SNINEVGSSTNEVGSSIN. Positions 1042-1062 are disordered; it reads SNINEVGSSTNEVGSSINEVG. Lys-1079 is covalently cross-linked (Glycyl lysine isopeptide (Lys-Gly) (interchain with G-Cter in SUMO2)). Residues Ser-1143, Ser-1189, Ser-1191, Ser-1211, Ser-1217, Ser-1218, Ser-1280, Ser-1328, Ser-1336, Ser-1342, and Ser-1387 each carry the phosphoserine modification. Positions 1323–1397 are disordered; sequence RMRHQSESQG…QSEILTTQQR (75 aa). Residues 1342–1360 show a composition bias toward acidic residues; the sequence is SDDEERGTGLEEDNQEEQS. Residues 1373-1397 are compositionally biased toward polar residues; it reads ESETSVSEDCSRLSSQSEILTTQQR. Phosphothreonine is present on Thr-1394. Residues 1397 to 1424 are interaction with PALB2; the sequence is RDTMQDNLIKLQQEMAELEAVLEQHGSQ. 4 positions are modified to phosphoserine: Ser-1423, Ser-1457, Ser-1524, and Ser-1542. Positions 1442 to 1501 are disordered; that stretch reads LRNPEQSTSEKAVLTSQKSSEYPINQNPEGLSADKFEVSADSSTSKNKEPGVERSSPSKC. Over residues 1445-1470 the composition is skewed to polar residues; that stretch reads PEQSTSEKAVLTSQKSSEYPINQNPE. The tract at residues 1540–1618 is disordered; the sequence is EKSGPHDLME…ESAQSPAAAH (79 aa). The span at 1607-1618 shows a compositional bias: polar residues; the sequence is VAESAQSPAAAH. 2 BRCT domains span residues 1642–1736 and 1756–1855; these read STER…DFEV and PDRK…TYLI.

As to quaternary structure, heterodimer with BARD1. Part of the BRCA1-associated genome surveillance complex (BASC), which contains BRCA1, MSH2, MSH6, MLH1, ATM, BLM, PMS2 and the MRE11-RAD50-NBN protein (MRN) complex. This association could be a dynamic process changing throughout the cell cycle and within subnuclear domains. Component of the BRCA1-A complex, at least composed of BRCA1, BARD1, UIMC1/RAP80, ABRAXAS1, BRCC3/BRCC36, BABAM2 and BABAM1/NBA1. Interacts (via the BRCT domains) with ABRAXAS1 (phosphorylated form); this is important for recruitment to sites of DNA damage. Can form a heterotetramer with two molecules of ABRAXAS1 (phosphorylated form). Component of the BRCA1-RBBP8 complex. Interacts (via the BRCT domains) with RBBP8 ('Ser-327' phosphorylated form); the interaction ubiquitinates RBBP8, regulates CHEK1 activation, and involves RBBP8 in BRCA1-dependent G2/M checkpoint control on DNA damage. Associates with RNA polymerase II holoenzyme. Interacts with SMC1A, NELFB, DCLRE1C, CLSPN. CHEK1, CHEK2, BAP1, BRCC3, UBXN1 and PCLAF. Interacts (via BRCT domains) with BRIP1 (phosphorylated form). Interacts with FANCD2 (ubiquitinated form). Interacts with H2AX (phosphorylated on 'Ser-140'). Interacts (via the BRCT domains) with ACACA (phosphorylated form); the interaction prevents dephosphorylation of ACACA. Part of a BRCA complex containing BRCA1, BRCA2 and PALB2. Interacts directly with PALB2; the interaction is essential for its function in HRR. Interacts directly with BRCA2; the interaction occurs only in the presence of PALB2 which serves as the bridging protein. Interacts (via the BRCT domains) with LMO4; the interaction represses the transcriptional activity of BRCA1. Interacts (via the BRCT domains) with CCAR2 (via N-terminus); the interaction represses the transcriptional activator activity of BRCA1. Interacts with EXD2. Interacts (via C-terminus) with DHX9; this interaction is direct and links BRCA1 to the RNA polymerase II holoenzyme. Interacts with DNA helicase ZGRF1; the interaction is increased following DNA damage induction. Post-translationally, phosphorylated in response to IR, UV, and various stimuli that cause checkpoint activation, probably by ATM or ATR. Phosphorylation at Ser-987 by CHEK2 regulates mitotic spindle assembly. Phosphorylation by AURKA regulates centrosomal microtubule nucleation. Autoubiquitinated, undergoes 'Lys-6'-linked polyubiquitination. 'Lys-6'-linked polyubiquitination does not promote degradation.

The protein resides in the nucleus. Its subcellular location is the chromosome. The protein localises to the cytoplasm. The catalysed reaction is S-ubiquitinyl-[E2 ubiquitin-conjugating enzyme]-L-cysteine + [acceptor protein]-L-lysine = [E2 ubiquitin-conjugating enzyme]-L-cysteine + N(6)-ubiquitinyl-[acceptor protein]-L-lysine.. Its pathway is protein modification; protein ubiquitination. In terms of biological role, E3 ubiquitin-protein ligase that specifically mediates the formation of 'Lys-6'-linked polyubiquitin chains and plays a central role in DNA repair by facilitating cellular responses to DNA damage. It is unclear whether it also mediates the formation of other types of polyubiquitin chains. The BRCA1-BARD1 heterodimer coordinates a diverse range of cellular pathways such as DNA damage repair, ubiquitination and transcriptional regulation to maintain genomic stability. Regulates centrosomal microtubule nucleation. Required for appropriate cell cycle arrests after ionizing irradiation in both the S-phase and the G2 phase of the cell cycle. Required for FANCD2 targeting to sites of DNA damage. Inhibits lipid synthesis by binding to inactive phosphorylated ACACA and preventing its dephosphorylation. Contributes to homologous recombination repair (HRR) via its direct interaction with PALB2, fine-tunes recombinational repair partly through its modulatory role in the PALB2-dependent loading of BRCA2-RAD51 repair machinery at DNA breaks. Component of the BRCA1-RBBP8 complex which regulates CHEK1 activation and controls cell cycle G2/M checkpoints on DNA damage via BRCA1-mediated ubiquitination of RBBP8. Acts as a transcriptional activator. This chain is Breast cancer type 1 susceptibility protein homolog (BRCA1), found in Macaca mulatta (Rhesus macaque).